The sequence spans 290 residues: 33 kDa chaperonin (290 aa).

2 cysteine pairs are disulfide-bonded: Cys-235-Cys-237 and Cys-268-Cys-271.

It belongs to the HSP33 family. In terms of processing, under oxidizing conditions two disulfide bonds are formed involving the reactive cysteines. Under reducing conditions zinc is bound to the reactive cysteines and the protein is inactive.

It is found in the cytoplasm. Functionally, redox regulated molecular chaperone. Protects both thermally unfolding and oxidatively damaged proteins from irreversible aggregation. Plays an important role in the bacterial defense system toward oxidative stress. In Streptococcus pyogenes serotype M1, this protein is 33 kDa chaperonin.